A 159-amino-acid polypeptide reads, in one-letter code: Large ribosomal subunit protein uL13 (159 aa).

Belongs to the universal ribosomal protein uL13 family. As to quaternary structure, part of the 50S ribosomal subunit.

This protein is one of the early assembly proteins of the 50S ribosomal subunit, although it is not seen to bind rRNA by itself. It is important during the early stages of 50S assembly. The chain is Large ribosomal subunit protein uL13 from Methanopyrus kandleri (strain AV19 / DSM 6324 / JCM 9639 / NBRC 100938).